We begin with the raw amino-acid sequence, 388 residues long: Chorismate synthase (388 aa).

NADP(+) contacts are provided by Arg39 and Arg45. FMN-binding positions include 132-134 (RSS), 251-252 (NA), Gly296, 311-315 (KPIPT), and Arg337.

Belongs to the chorismate synthase family. As to quaternary structure, homotetramer. FMNH2 is required as a cofactor.

The catalysed reaction is 5-O-(1-carboxyvinyl)-3-phosphoshikimate = chorismate + phosphate. Its pathway is metabolic intermediate biosynthesis; chorismate biosynthesis; chorismate from D-erythrose 4-phosphate and phosphoenolpyruvate: step 7/7. Its function is as follows. Catalyzes the anti-1,4-elimination of the C-3 phosphate and the C-6 proR hydrogen from 5-enolpyruvylshikimate-3-phosphate (EPSP) to yield chorismate, which is the branch point compound that serves as the starting substrate for the three terminal pathways of aromatic amino acid biosynthesis. This reaction introduces a second double bond into the aromatic ring system. The polypeptide is Chorismate synthase (Staphylococcus aureus (strain MW2)).